The following is a 600-amino-acid chain: Nisin transport ATP-binding protein NisT (600 aa).

Helical transmembrane passes span 34-54 (AIYL…SLFI), 69-89 (LINI…LGQL), 147-167 (AIIV…FIGT), 168-188 (WNIG…VLFL), and 260-280 (IFLD…MILS). In terms of domain architecture, ABC transmembrane type-1 spans 34 to 317 (AIYLIVLNAI…MIQNIYIIYN (284 aa)). The 241-residue stretch at 352 to 592 (VKVINLSYVY…CQYYQELYYS (241 aa)) folds into the ABC transporter domain. 386-393 (GKNGSGKS) serves as a coordination point for ATP.

It belongs to the ABC transporter superfamily. Nisin exporter (TC 3.A.1.111.3) family.

Its subcellular location is the cell membrane. In terms of biological role, probably implicated in the export process of the lantibiotic nisin. This chain is Nisin transport ATP-binding protein NisT (nisT), found in Lactococcus lactis subsp. lactis (Streptococcus lactis).